Here is a 755-residue protein sequence, read N- to C-terminus: Polyribonucleotide nucleotidyltransferase (755 aa).

Mg(2+) is bound by residues D493 and D499. One can recognise a KH domain in the interval 560-619 (PRIMTIQIPVDKIGALIGPGGKTIRNICDTTGAQIDIEDDGRVFITAPDGEAAKKAISMI). The 70-residue stretch at 629–698 (GDIFLGKVVS…NTGKISLSRR (70 aa)) folds into the S1 motif domain. Residues 704–755 (ETPEARKAAGAAPRPRPREEQRGGREEPRSLREELRGPRRDGERPRPRRRDD) are disordered. Residues 719–755 (RPREEQRGGREEPRSLREELRGPRRDGERPRPRRRDD) are compositionally biased toward basic and acidic residues.

Belongs to the polyribonucleotide nucleotidyltransferase family. Mg(2+) is required as a cofactor.

The protein resides in the cytoplasm. The enzyme catalyses RNA(n+1) + phosphate = RNA(n) + a ribonucleoside 5'-diphosphate. Involved in mRNA degradation. Catalyzes the phosphorolysis of single-stranded polyribonucleotides processively in the 3'- to 5'-direction. The protein is Polyribonucleotide nucleotidyltransferase of Chloroflexus aggregans (strain MD-66 / DSM 9485).